Here is a 636-residue protein sequence, read N- to C-terminus: Chaperone protein DnaK (636 aa).

Residue Thr198 is modified to Phosphothreonine; by autocatalysis. The disordered stretch occupies residues 600 to 636 (IAQQQAQAQQGSAEAGAQSQEDDVVDAEFEEVKDDKK). Residues 601–618 (AQQQAQAQQGSAEAGAQS) show a composition bias toward low complexity. Over residues 619–636 (QEDDVVDAEFEEVKDDKK) the composition is skewed to acidic residues.

This sequence belongs to the heat shock protein 70 family.

Its function is as follows. Acts as a chaperone. This chain is Chaperone protein DnaK, found in Vibrio vulnificus (strain CMCP6).